The following is a 101-amino-acid chain: Movement protein (101 aa).

A helical membrane pass occupies residues 30 to 50 (EVAILSFVALICIYLLYLWVL).

It belongs to the mastrevirus movement protein family. In terms of assembly, interacts with the capsid protein (CP). Part of a MP-CP-viral DNA complex.

It is found in the host membrane. Functionally, involved in the viral transport within, and between cells. This chain is Movement protein, found in Maize streak virus genotype D (isolate Raw) (MSV).